A 334-amino-acid chain; its full sequence is MTEEKKINPPIFPFTAIVGQEEMKLALQLNVIDPKIGGVMIMGDRGTGKSTTIRAIADLLPEIEVVKDNQFNTAPSEDLNEEIVKIKTPMIDLPLGATEDRVCGTIDIEKALTDGVKAFEPGLLAKANRGILYVDEVNLLDDHLVDILLDSAASGLNTVEREGISIRHAARFVLVGSGNPEEGELRPQLLDRFGMHAVIKTVKDPKLRVRVVEERTLFDLNPEEWINKYREQQEALKTRIIAAQNLISSVTISDDFKLKISQVCSELDVDGLRGDIVTNRAAKAYAAFNNRTEVEIGDIEKVITLCLRHRLRKDPLETIDSGDKVQKLFEEIFD.

Glycine 43–serine 50 contributes to the ATP binding site.

It belongs to the Mg-chelatase subunits D/I family.

Its subcellular location is the plastid. It is found in the chloroplast. It catalyses the reaction protoporphyrin IX + Mg(2+) + ATP + H2O = Mg-protoporphyrin IX + ADP + phosphate + 3 H(+). Its pathway is porphyrin-containing compound metabolism; chlorophyll biosynthesis. Involved in chlorophyll biosynthesis; introduces a magnesium ion into protoporphyrin IX to yield Mg-protoporphyrin IX. The polypeptide is Magnesium-chelatase subunit ChlI (chlI) (Olisthodiscus luteus (Marine phytoflagellate)).